A 79-amino-acid chain; its full sequence is Acyl carrier protein 2 (79 aa).

Positions 2-77 (DDIETRVRKL…QAIDYLEEAV (76 aa)) constitute a Carrier domain. At serine 37 the chain carries O-(pantetheine 4'-phosphoryl)serine.

The protein belongs to the acyl carrier protein (ACP) family. Post-translationally, 4'-phosphopantetheine is transferred from CoA to a specific serine of apo-ACP by AcpS. This modification is essential for activity because fatty acids are bound in thioester linkage to the sulfhydryl of the prosthetic group.

Its subcellular location is the cytoplasm. Its pathway is lipid metabolism; fatty acid biosynthesis. Functionally, carrier of the growing fatty acid chain in fatty acid biosynthesis. The protein is Acyl carrier protein 2 of Pseudomonas aeruginosa (strain ATCC 15692 / DSM 22644 / CIP 104116 / JCM 14847 / LMG 12228 / 1C / PRS 101 / PAO1).